Consider the following 1358-residue polypeptide: MAYSYTEKKRIRKDFGKLPQVMDVPYLLAIQLDSYFDFLQQDRAIEERLDVGLHAAFKSVFPIESFSGNAALEYVSYRFGTPAFDVKECQLRGVTYSAPLRVKVRLIIYDKDSSTKAIKDIKEQEVYMGEIPLMTENGTFVVNGTERVIVSQLHRSPGVFFDHDKGKSHSSGKLLYSARIIPYRGSWLDFEFDPKDNVYVRIDRRRKLPATVLLRALGMSAEEILETFFDTSTFHIEKSGFSVELVPSRLRGETATFDIKDGEGNLIVEEGRRITQKHIRQMEKAGLERLDVPMEYLFGKTLAKDQVDPNTGELVCECNTEITPELLEKIGQAGITTLETLYTNDLDTGPFVSDTLKIDTTHSQLEALVEIYRMMRPGEPPTKEAAETLFHNLFFTEDRYDLSGVGRMKFNRRLRREGDTGSGVLDNQDILDVMRELINIRNGFGEVDDIDHLGNRRIRCVGEMAENQFRVGLVRVERAVKERLSMAESEGLMPQDLINAKPVAAAVKEFFGSSQLSQFMDQNNPLSEVTHKRRVSALGPGGLTRERAGFEVRDVHATHYGRLCPIETLEGPNIGLINSLATYSHTNSYGFLETPYRKVVDRQVTDEVVHLSAIEEGDFIIAQASATVDESNKLTDDLVQVRHKGETTFMAPDKVTLMDVSPRQVVSVAAALIPFLEHDDANRALMGSNMQRQAVPTLKAEKPLVGTGMERFVARDSGVCAVARRGGVIDSVDAKRIVVRINEDEIIGGEAGVDIYNLTKYVRSNQNTCMNQRPIVRPGDVVARGDILADGPSVDMGDLALGQNMRMAFMPWNGYNFEDSILISERVVEEDRFTSIHIQELTCVSRDTKLGAEEISSDIPNVGEAALGKLDDAGIVYIGAEVGAGDILVGKVTPKGETQLTPEEKLLRAIFGEKASDVKDTSLRAPTGMKGTVIDVQVFTRDGVEKDSRALSIEQSQLDEVRKDLQETYRIAEEATFERLKRALIGQPVNGGPKLKKGDTLDEAYLDELPRSQWFKLRMQDESLNELLAQADEQLENRRKEMDERFEDKKRKLTQGDDLAPGVLKIVKVYLAVKRRIQSGDKMAGRHGNKGVISSIMPIEDMPFDDNGEPVDVVLNPLGVPSRMNVGQILETHLGMAANGLGVKIDRMLRDARQQQVAEIRDFLGQVYNTAETRQEDIDSLSDDEIITLAKNLRSGVPVATPVFDGAKEHEIKHLLTLADLPDSGQMTLYDGRTGDAFDRQVTVGYMYMLKLNHLVDDKMHARSTGSYSLVTQQPLGGKAQFGGQRFGEMEVWALEAYGAAYTLQEMLTVKSDDVEGRTKMYKNIVDGDHSMQAGMPESFNVLVKEIRSLGIDIELEG.

This sequence belongs to the RNA polymerase beta chain family. In terms of assembly, the RNAP catalytic core consists of 2 alpha, 1 beta, 1 beta' and 1 omega subunit. When a sigma factor is associated with the core the holoenzyme is formed, which can initiate transcription.

The catalysed reaction is RNA(n) + a ribonucleoside 5'-triphosphate = RNA(n+1) + diphosphate. In terms of biological role, DNA-dependent RNA polymerase catalyzes the transcription of DNA into RNA using the four ribonucleoside triphosphates as substrates. In Chromohalobacter salexigens (strain ATCC BAA-138 / DSM 3043 / CIP 106854 / NCIMB 13768 / 1H11), this protein is DNA-directed RNA polymerase subunit beta.